Reading from the N-terminus, the 484-residue chain is tRNA sulfurtransferase (484 aa).

The THUMP domain maps to 56-158 (NCLKKALSKV…GNRAYFYTEV (103 aa)). Residues 176–177 (LV), Lys257, Gly279, and Gln288 contribute to the ATP site. A disulfide bridge links Cys336 with Cys444. Residues 396 to 479 (APEGAVIVDL…TRNAVPPSSQ (84 aa)) form the Rhodanese domain. Cys444 serves as the catalytic Cysteine persulfide intermediate.

It belongs to the ThiI family.

It localises to the cytoplasm. The enzyme catalyses [ThiI sulfur-carrier protein]-S-sulfanyl-L-cysteine + a uridine in tRNA + 2 reduced [2Fe-2S]-[ferredoxin] + ATP + H(+) = [ThiI sulfur-carrier protein]-L-cysteine + a 4-thiouridine in tRNA + 2 oxidized [2Fe-2S]-[ferredoxin] + AMP + diphosphate. It catalyses the reaction [ThiS sulfur-carrier protein]-C-terminal Gly-Gly-AMP + S-sulfanyl-L-cysteinyl-[cysteine desulfurase] + AH2 = [ThiS sulfur-carrier protein]-C-terminal-Gly-aminoethanethioate + L-cysteinyl-[cysteine desulfurase] + A + AMP + 2 H(+). It functions in the pathway cofactor biosynthesis; thiamine diphosphate biosynthesis. In terms of biological role, catalyzes the ATP-dependent transfer of a sulfur to tRNA to produce 4-thiouridine in position 8 of tRNAs, which functions as a near-UV photosensor. Also catalyzes the transfer of sulfur to the sulfur carrier protein ThiS, forming ThiS-thiocarboxylate. This is a step in the synthesis of thiazole, in the thiamine biosynthesis pathway. The sulfur is donated as persulfide by IscS. This chain is tRNA sulfurtransferase, found in Pyrobaculum aerophilum (strain ATCC 51768 / DSM 7523 / JCM 9630 / CIP 104966 / NBRC 100827 / IM2).